A 65-amino-acid chain; its full sequence is Small ribosomal subunit protein bS21 (65 aa).

Over residues 33 to 42 the composition is skewed to basic and acidic residues; it reads RRREHYEKPS. Positions 33–65 are disordered; the sequence is RRREHYEKPSVKRKRKEAARLRKLQKMAREANN. Residues 43 to 58 show a composition bias toward basic residues; that stretch reads VKRKRKEAARLRKLQK.

This sequence belongs to the bacterial ribosomal protein bS21 family.

The sequence is that of Small ribosomal subunit protein bS21 from Herpetosiphon aurantiacus (strain ATCC 23779 / DSM 785 / 114-95).